We begin with the raw amino-acid sequence, 79 residues long: Acyl carrier protein (79 aa).

Residues 2–77 (SEIADKVKKI…DAIDYIEKQK (76 aa)) form the Carrier domain. Residue serine 37 is modified to O-(pantetheine 4'-phosphoryl)serine.

Belongs to the acyl carrier protein (ACP) family. 4'-phosphopantetheine is transferred from CoA to a specific serine of apo-ACP by AcpS. This modification is essential for activity because fatty acids are bound in thioester linkage to the sulfhydryl of the prosthetic group.

It is found in the cytoplasm. It functions in the pathway lipid metabolism; fatty acid biosynthesis. Carrier of the growing fatty acid chain in fatty acid biosynthesis. The sequence is that of Acyl carrier protein from Gluconacetobacter diazotrophicus (strain ATCC 49037 / DSM 5601 / CCUG 37298 / CIP 103539 / LMG 7603 / PAl5).